The chain runs to 171 residues: NADH-quinone oxidoreductase subunit B (171 aa).

[4Fe-4S] cluster-binding residues include Cys-34, Cys-35, Cys-99, and Cys-128.

Belongs to the complex I 20 kDa subunit family. As to quaternary structure, NDH-1 is composed of 14 different subunits. Subunits NuoB, C, D, E, F, and G constitute the peripheral sector of the complex. Requires [4Fe-4S] cluster as cofactor.

Its subcellular location is the cell inner membrane. The enzyme catalyses a quinone + NADH + 5 H(+)(in) = a quinol + NAD(+) + 4 H(+)(out). Its function is as follows. NDH-1 shuttles electrons from NADH, via FMN and iron-sulfur (Fe-S) centers, to quinones in the respiratory chain. The immediate electron acceptor for the enzyme in this species is believed to be ubiquinone. Couples the redox reaction to proton translocation (for every two electrons transferred, four hydrogen ions are translocated across the cytoplasmic membrane), and thus conserves the redox energy in a proton gradient. This is NADH-quinone oxidoreductase subunit B from Sulfurihydrogenibium sp. (strain YO3AOP1).